We begin with the raw amino-acid sequence, 264 residues long: Putative hydro-lyase cgR_2449 (264 aa).

Belongs to the D-glutamate cyclase family.

In Corynebacterium glutamicum (strain R), this protein is Putative hydro-lyase cgR_2449.